The primary structure comprises 190 residues: Selenoprotein S (190 aa).

The helical transmembrane segment at 28 to 48 (SLLASYGWYILFSCVLLYIVI) threads the bilayer. The segment at 78-90 (RQEALAAARLRMQ) is VCP/p97-interacting motif (VIM). The interval 96-190 (QVEKHKEKQR…RRGPSSGGUS (95 aa)) is disordered. The segment covering 97 to 118 (VEKHKEKQRQLEEEKRRQKIEM) has biased composition (basic and acidic residues). Residues 160 to 174 (RGGGYNPLTGEGGGT) are compositionally biased toward gly residues. Residue U189 is a non-standard amino acid, selenocysteine.

Belongs to the selenoprotein S family. Interacts with DERL1 and (via VIM motif) with VCP, suggesting that it forms a membrane complex with DERL1 that serves as a receptor for VCP. Also interacts with DERL2, DERL3 and SELENOK. The SELENOK-SELENOS complex interacts with VCP. Interacts with CCDC47. Post-translationally, truncated SELENOS proteins produced by failed UGA/Sec decoding are ubiquitinated by the CRL2(KLHDC2) and CRL2(KLHDC3) complexes, which recognizes the glycine (Gly) at the C-terminus of truncated SELENOS proteins. Truncated SELENOS proteins produced by failed UGA/Sec decoding are also ubiquitinated by the CRL5(KLHDC1) complex.

Its subcellular location is the endoplasmic reticulum membrane. It is found in the cytoplasm. Involved in the degradation process of misfolded endoplasmic reticulum (ER) luminal proteins. Participates in the transfer of misfolded proteins from the ER to the cytosol, where they are destroyed by the proteasome in a ubiquitin-dependent manner. Probably acts by serving as a linker between DERL1, which mediates the retrotranslocation of misfolded proteins into the cytosol, and the ATPase complex VCP, which mediates the translocation and ubiquitination. In Rattus norvegicus (Rat), this protein is Selenoprotein S.